The sequence spans 234 residues: Glucosamine-6-phosphate deaminase (234 aa).

The active-site Proton acceptor; for enolization step is aspartate 62. Asparagine 128 functions as the For ring-opening step in the catalytic mechanism. The Proton acceptor; for ring-opening step role is filled by histidine 130. Glutamate 135 acts as the For ring-opening step in catalysis.

It belongs to the glucosamine/galactosamine-6-phosphate isomerase family. NagB subfamily.

It catalyses the reaction alpha-D-glucosamine 6-phosphate + H2O = beta-D-fructose 6-phosphate + NH4(+). Its pathway is amino-sugar metabolism; N-acetylneuraminate degradation; D-fructose 6-phosphate from N-acetylneuraminate: step 5/5. In terms of biological role, catalyzes the reversible isomerization-deamination of glucosamine 6-phosphate (GlcN6P) to form fructose 6-phosphate (Fru6P) and ammonium ion. This chain is Glucosamine-6-phosphate deaminase, found in Streptococcus equi subsp. zooepidemicus (strain MGCS10565).